Reading from the N-terminus, the 382-residue chain is uncharacterized protein (382 aa).

Residues 1–25 form the signal peptide; that stretch reads MKKWMAAVFVMMLMLCFGGIENVKA. Serine 186 functions as the Nucleophile in the catalytic mechanism. Residues aspartate 354 and histidine 357 contribute to the active site.

This sequence belongs to the 'GDSL' lipolytic enzyme family.

This is an uncharacterized protein from Bacillus subtilis (strain 168).